The chain runs to 861 residues: FO synthase (861 aa).

2 consecutive Radical SAM core domains span residues Ile-69–Pro-319 and Val-528–Pro-763. The tract at residues Thr-70–Leu-401 is cofG-like. 6 residues coordinate [4Fe-4S] cluster: Cys-83, Cys-87, Cys-90, Cys-542, Cys-546, and Cys-549. The segment at Asp-505–Val-838 is cofH-like.

The protein in the N-terminal section; belongs to the radical SAM superfamily. CofG family. This sequence in the C-terminal section; belongs to the radical SAM superfamily. CofH family. [4Fe-4S] cluster is required as a cofactor.

The enzyme catalyses 5-amino-6-(D-ribitylamino)uracil + L-tyrosine + S-adenosyl-L-methionine = 5-amino-5-(4-hydroxybenzyl)-6-(D-ribitylimino)-5,6-dihydrouracil + 2-iminoacetate + 5'-deoxyadenosine + L-methionine + H(+). It carries out the reaction 5-amino-5-(4-hydroxybenzyl)-6-(D-ribitylimino)-5,6-dihydrouracil + S-adenosyl-L-methionine = 7,8-didemethyl-8-hydroxy-5-deazariboflavin + 5'-deoxyadenosine + L-methionine + NH4(+) + H(+). It participates in cofactor biosynthesis; coenzyme F0 biosynthesis. In terms of biological role, catalyzes the radical-mediated synthesis of 7,8-didemethyl-8-hydroxy-5-deazariboflavin (FO) from 5-amino-6-(D-ribitylamino)uracil and L-tyrosine. The sequence is that of FO synthase (fbiC) from Streptomyces avermitilis (strain ATCC 31267 / DSM 46492 / JCM 5070 / NBRC 14893 / NCIMB 12804 / NRRL 8165 / MA-4680).